We begin with the raw amino-acid sequence, 392 residues long: Formate-dependent phosphoribosylglycinamide formyltransferase (392 aa).

N(1)-(5-phospho-beta-D-ribosyl)glycinamide-binding positions include 22–23 (EL) and E82. Residues R114, K155, 160 to 165 (SSGKGQ), 195 to 198 (EGVV), and E203 contribute to the ATP site. In terms of domain architecture, ATP-grasp spans 119–308 (RLAAEELGLP…EFALHVRAFL (190 aa)). The Mg(2+) site is built by E267 and E279. N(1)-(5-phospho-beta-D-ribosyl)glycinamide contacts are provided by residues D286, K355, and 362-363 (RR).

The protein belongs to the PurK/PurT family. Homodimer.

It carries out the reaction N(1)-(5-phospho-beta-D-ribosyl)glycinamide + formate + ATP = N(2)-formyl-N(1)-(5-phospho-beta-D-ribosyl)glycinamide + ADP + phosphate + H(+). It functions in the pathway purine metabolism; IMP biosynthesis via de novo pathway; N(2)-formyl-N(1)-(5-phospho-D-ribosyl)glycinamide from N(1)-(5-phospho-D-ribosyl)glycinamide (formate route): step 1/1. Involved in the de novo purine biosynthesis. Catalyzes the transfer of formate to 5-phospho-ribosyl-glycinamide (GAR), producing 5-phospho-ribosyl-N-formylglycinamide (FGAR). Formate is provided by PurU via hydrolysis of 10-formyl-tetrahydrofolate. This chain is Formate-dependent phosphoribosylglycinamide formyltransferase, found in Salmonella choleraesuis (strain SC-B67).